A 311-amino-acid chain; its full sequence is Ribonuclease HIII (311 aa).

Residues 95–311 (MSIVGSDEVG…NTEKAFRLLK (217 aa)) enclose the RNase H type-2 domain. A divalent metal cation contacts are provided by aspartate 101, glutamate 102, and aspartate 206.

Belongs to the RNase HII family. RnhC subfamily. Mn(2+) is required as a cofactor. The cofactor is Mg(2+).

The protein localises to the cytoplasm. It catalyses the reaction Endonucleolytic cleavage to 5'-phosphomonoester.. Endonuclease that specifically degrades the RNA of RNA-DNA hybrids. This is Ribonuclease HIII from Bacillus cereus (strain ATCC 10987 / NRS 248).